The sequence spans 594 residues: DNA ligase (594 aa).

E280 is a binding site for ATP. K282 serves as the catalytic N6-AMP-lysine intermediate. ATP contacts are provided by R287, R316, E345, F385, R456, and K462.

Belongs to the ATP-dependent DNA ligase family. Mg(2+) is required as a cofactor.

It carries out the reaction ATP + (deoxyribonucleotide)n-3'-hydroxyl + 5'-phospho-(deoxyribonucleotide)m = (deoxyribonucleotide)n+m + AMP + diphosphate.. Functionally, DNA ligase that seals nicks in double-stranded DNA during DNA replication, DNA recombination and DNA repair. This Halorubrum lacusprofundi (strain ATCC 49239 / DSM 5036 / JCM 8891 / ACAM 34) protein is DNA ligase.